A 55-amino-acid chain; its full sequence is Ferredoxin (55 aa).

4Fe-4S ferredoxin-type domains lie at Phe2 to Asp27 and Thr28 to Glu55. [4Fe-4S] cluster contacts are provided by Cys8, Cys11, Cys14, Cys18, Cys37, Cys40, Cys43, and Cys47.

Requires [4Fe-4S] cluster as cofactor.

Its function is as follows. Ferredoxins are iron-sulfur proteins that transfer electrons in a wide variety of metabolic reactions. This is Ferredoxin from Clostridium butyricum.